Here is a 777-residue protein sequence, read N- to C-terminus: 1,4-alpha-glucan branching enzyme GlgB (777 aa).

Asp408 acts as the Nucleophile in catalysis. The active-site Proton donor is Glu461.

This sequence belongs to the glycosyl hydrolase 13 family. GlgB subfamily. In terms of assembly, monomer.

The enzyme catalyses Transfers a segment of a (1-&gt;4)-alpha-D-glucan chain to a primary hydroxy group in a similar glucan chain.. It functions in the pathway glycan biosynthesis; glycogen biosynthesis. Its function is as follows. Catalyzes the formation of the alpha-1,6-glucosidic linkages in glycogen by scission of a 1,4-alpha-linked oligosaccharide from growing alpha-1,4-glucan chains and the subsequent attachment of the oligosaccharide to the alpha-1,6 position. The polypeptide is 1,4-alpha-glucan branching enzyme GlgB (Actinobacillus pleuropneumoniae serotype 7 (strain AP76)).